A 214-amino-acid chain; its full sequence is uncharacterized protein (214 aa).

Residues 1–49 (MATRGAVAAAASTIWKHRRNPSLRSLSRHFNPNFNHRIIPTGFKYQVRA) constitute a chloroplast transit peptide.

The protein localises to the plastid. It localises to the chloroplast. This is an uncharacterized protein from Arabidopsis thaliana (Mouse-ear cress).